The primary structure comprises 449 residues: Dynein axonemal assembly factor 3 (449 aa).

The protein belongs to the DNAAF3 family.

The protein localises to the cytoplasm. The protein resides in the dynein axonemal particle. Functionally, required for the assembly of axonemal inner and outer dynein arms. Involved in preassembly of dyneins into complexes before their transport into cilia. The chain is Dynein axonemal assembly factor 3 (dnaaf3) from Xenopus tropicalis (Western clawed frog).